We begin with the raw amino-acid sequence, 321 residues long: uncharacterized protein (321 aa).

The protein belongs to the NAD(P)-dependent epimerase/dehydratase family.

This is an uncharacterized protein from Staphylococcus aureus (strain COL).